A 402-amino-acid chain; its full sequence is Apolipoprotein L3 (402 aa).

This sequence belongs to the apolipoprotein L family. As to expression, widely expressed; the highest levels are in prostate, lung and placenta; also detected in kidney, bone marrow, spleen, thymus, spinal cord, adrenal gland, salivary gland, trachea and mammary gland; levels are low in brain, heart, fetal liver, pancreas and testis.

It is found in the cytoplasm. Functionally, may affect the movement of lipids in the cytoplasm or allow the binding of lipids to organelles. The protein is Apolipoprotein L3 (APOL3) of Homo sapiens (Human).